The following is a 336-amino-acid chain: Ribose-phosphate pyrophosphokinase (336 aa).

ATP-binding positions include 43–45 (DQE) and 102–103 (RQ). Residues His-136 and Asp-178 each coordinate Mg(2+). Lys-201 is a catalytic residue. D-ribose 5-phosphate is bound by residues Arg-203, Asp-227, and 231 to 235 (DTAGT).

Belongs to the ribose-phosphate pyrophosphokinase family. Class I subfamily. Homohexamer. Requires Mg(2+) as cofactor.

The protein resides in the cytoplasm. The catalysed reaction is D-ribose 5-phosphate + ATP = 5-phospho-alpha-D-ribose 1-diphosphate + AMP + H(+). The protein operates within metabolic intermediate biosynthesis; 5-phospho-alpha-D-ribose 1-diphosphate biosynthesis; 5-phospho-alpha-D-ribose 1-diphosphate from D-ribose 5-phosphate (route I): step 1/1. In terms of biological role, involved in the biosynthesis of the central metabolite phospho-alpha-D-ribosyl-1-pyrophosphate (PRPP) via the transfer of pyrophosphoryl group from ATP to 1-hydroxyl of ribose-5-phosphate (Rib-5-P). The sequence is that of Ribose-phosphate pyrophosphokinase from Cereibacter sphaeroides (strain KD131 / KCTC 12085) (Rhodobacter sphaeroides).